A 507-amino-acid chain; its full sequence is ATP synthase subunit alpha, chloroplastic (507 aa).

170–177 (GDRQTGKT) contributes to the ATP binding site.

The protein belongs to the ATPase alpha/beta chains family. In terms of assembly, F-type ATPases have 2 components, CF(1) - the catalytic core - and CF(0) - the membrane proton channel. CF(1) has five subunits: alpha(3), beta(3), gamma(1), delta(1), epsilon(1). CF(0) has four main subunits: a, b, b' and c.

Its subcellular location is the plastid. It localises to the chloroplast thylakoid membrane. It carries out the reaction ATP + H2O + 4 H(+)(in) = ADP + phosphate + 5 H(+)(out). Its function is as follows. Produces ATP from ADP in the presence of a proton gradient across the membrane. The alpha chain is a regulatory subunit. This is ATP synthase subunit alpha, chloroplastic from Illicium oligandrum (Star anise).